A 333-amino-acid polypeptide reads, in one-letter code: Cell division protein ZipA (333 aa).

Topologically, residues 1 to 5 (MQELR) are periplasmic. The chain crosses the membrane as a helical span at residues 6-26 (LVLILVGALAIAALLFHGLWT). Topologically, residues 27 to 333 (SRKETSSKFG…KQRVKVFCRK (307 aa)) are cytoplasmic. Residues 72 to 81 (KEPAFAREEV) show a composition bias toward basic and acidic residues. The tract at residues 72–119 (KEPAFAREEVPTSDDPLFEGTVSSESNKFTQQEKPTVQQAQPQPQPQP) is disordered. Polar residues predominate over residues 92 to 107 (TVSSESNKFTQQEKPT). Positions 108–119 (VQQAQPQPQPQP) are enriched in low complexity.

The protein belongs to the ZipA family. Interacts with FtsZ via their C-terminal domains.

Its subcellular location is the cell inner membrane. Its function is as follows. Essential cell division protein that stabilizes the FtsZ protofilaments by cross-linking them and that serves as a cytoplasmic membrane anchor for the Z ring. Also required for the recruitment to the septal ring of downstream cell division proteins. The polypeptide is Cell division protein ZipA (Aliivibrio fischeri (strain ATCC 700601 / ES114) (Vibrio fischeri)).